The primary structure comprises 294 residues: Ribosomal RNA small subunit methyltransferase A (294 aa).

Residues Asn-29, Val-31, Gly-56, Glu-77, Asp-107, and Asn-126 each contribute to the S-adenosyl-L-methionine site.

The protein belongs to the class I-like SAM-binding methyltransferase superfamily. rRNA adenine N(6)-methyltransferase family. RsmA subfamily.

The protein resides in the cytoplasm. The enzyme catalyses adenosine(1518)/adenosine(1519) in 16S rRNA + 4 S-adenosyl-L-methionine = N(6)-dimethyladenosine(1518)/N(6)-dimethyladenosine(1519) in 16S rRNA + 4 S-adenosyl-L-homocysteine + 4 H(+). Specifically dimethylates two adjacent adenosines (A1518 and A1519) in the loop of a conserved hairpin near the 3'-end of 16S rRNA in the 30S particle. May play a critical role in biogenesis of 30S subunits. In Mycobacterium sp. (strain MCS), this protein is Ribosomal RNA small subunit methyltransferase A.